The chain runs to 64 residues: Large ribosomal subunit protein bL35 (64 aa).

Residues 1–55 are disordered; sequence MPKMKTNKSVSARFKLTASGQLKRTRPGKRHKLSKKSSQEKRNLSKQPLVDKGQV. Over residues 23–35 the composition is skewed to basic residues; that stretch reads KRTRPGKRHKLSK.

Belongs to the bacterial ribosomal protein bL35 family.

The protein is Large ribosomal subunit protein bL35 of Chlamydia pneumoniae (Chlamydophila pneumoniae).